The chain runs to 192 residues: MSLSINAVARTQEGKGASRRLRNEGLVPAVIYGGETAPVSISFKDNELLKAVGTPGFLTGLVEVTVEGKTEQVLVKALQRHPSTGAVMHMDLQRAQADKAITTRVPLSFINAAQSEGVSKQGGRLTVESKLAEVRCLPANLPEVLTVDVIKGQLDQIFHLSDVILPEGVELVSLLKGEDHDQPIARIGKSKR.

It belongs to the bacterial ribosomal protein bL25 family. CTC subfamily. As to quaternary structure, part of the 50S ribosomal subunit; part of the 5S rRNA/L5/L18/L25 subcomplex. Contacts the 5S rRNA. Binds to the 5S rRNA independently of L5 and L18.

Its function is as follows. This is one of the proteins that binds to the 5S RNA in the ribosome where it forms part of the central protuberance. The chain is Large ribosomal subunit protein bL25 from Marinomonas sp. (strain MWYL1).